Here is a 345-residue protein sequence, read N- to C-terminus: Dihydroorotate dehydrogenase (quinone) (345 aa).

FMN is bound by residues 65-69 (AGLDK) and Thr-89. A substrate-binding site is contributed by Lys-69. 114-118 (NRMGF) serves as a coordination point for substrate. FMN-binding residues include Asn-142 and Asn-175. Position 175 (Asn-175) interacts with substrate. The Nucleophile role is filled by Ser-178. A substrate-binding site is contributed by Asn-180. Positions 220 and 248 each coordinate FMN. A substrate-binding site is contributed by 249–250 (NT). FMN is bound by residues Gly-271, Gly-300, and 321-322 (YT).

This sequence belongs to the dihydroorotate dehydrogenase family. Type 2 subfamily. In terms of assembly, monomer. The cofactor is FMN.

It localises to the cell membrane. The enzyme catalyses (S)-dihydroorotate + a quinone = orotate + a quinol. Its pathway is pyrimidine metabolism; UMP biosynthesis via de novo pathway; orotate from (S)-dihydroorotate (quinone route): step 1/1. Catalyzes the conversion of dihydroorotate to orotate with quinone as electron acceptor. This Burkholderia cenocepacia (strain HI2424) protein is Dihydroorotate dehydrogenase (quinone).